The primary structure comprises 109 residues: Nucleoid-associated protein SG0690 (109 aa).

Positions 1–23 are disordered; it reads MFGKGGMGNLMKQAQQMQEKMQR.

The protein belongs to the YbaB/EbfC family. Homodimer.

It is found in the cytoplasm. It localises to the nucleoid. Functionally, binds to DNA and alters its conformation. May be involved in regulation of gene expression, nucleoid organization and DNA protection. The protein is Nucleoid-associated protein SG0690 of Sodalis glossinidius (strain morsitans).